Here is a 307-residue protein sequence, read N- to C-terminus: Ribonuclease Z (307 aa).

Positions 63, 65, 67, 68, 141, 212, and 270 each coordinate Zn(2+). D67 serves as the catalytic Proton acceptor.

Belongs to the RNase Z family. Homodimer. The cofactor is Zn(2+).

The catalysed reaction is Endonucleolytic cleavage of RNA, removing extra 3' nucleotides from tRNA precursor, generating 3' termini of tRNAs. A 3'-hydroxy group is left at the tRNA terminus and a 5'-phosphoryl group is left at the trailer molecule.. Functionally, zinc phosphodiesterase, which displays some tRNA 3'-processing endonuclease activity. Probably involved in tRNA maturation, by removing a 3'-trailer from precursor tRNA. In Bacillus mycoides (strain KBAB4) (Bacillus weihenstephanensis), this protein is Ribonuclease Z.